A 110-amino-acid polypeptide reads, in one-letter code: Large ribosomal subunit protein uL22 (110 aa).

Belongs to the universal ribosomal protein uL22 family. Part of the 50S ribosomal subunit.

In terms of biological role, this protein binds specifically to 23S rRNA; its binding is stimulated by other ribosomal proteins, e.g. L4, L17, and L20. It is important during the early stages of 50S assembly. It makes multiple contacts with different domains of the 23S rRNA in the assembled 50S subunit and ribosome. Its function is as follows. The globular domain of the protein is located near the polypeptide exit tunnel on the outside of the subunit, while an extended beta-hairpin is found that lines the wall of the exit tunnel in the center of the 70S ribosome. The polypeptide is Large ribosomal subunit protein uL22 (Syntrophobacter fumaroxidans (strain DSM 10017 / MPOB)).